We begin with the raw amino-acid sequence, 141 residues long: Large ribosomal subunit protein uL11 (141 aa).

Belongs to the universal ribosomal protein uL11 family. As to quaternary structure, part of the ribosomal stalk of the 50S ribosomal subunit. Interacts with L10 and the large rRNA to form the base of the stalk. L10 forms an elongated spine to which L12 dimers bind in a sequential fashion forming a multimeric L10(L12)X complex. One or more lysine residues are methylated.

Forms part of the ribosomal stalk which helps the ribosome interact with GTP-bound translation factors. The chain is Large ribosomal subunit protein uL11 from Streptococcus uberis (strain ATCC BAA-854 / 0140J).